Reading from the N-terminus, the 185-residue chain is Elongation factor P (185 aa).

It belongs to the elongation factor P family.

Its subcellular location is the cytoplasm. It participates in protein biosynthesis; polypeptide chain elongation. Functionally, involved in peptide bond synthesis. Stimulates efficient translation and peptide-bond synthesis on native or reconstituted 70S ribosomes in vitro. Probably functions indirectly by altering the affinity of the ribosome for aminoacyl-tRNA, thus increasing their reactivity as acceptors for peptidyl transferase. In Bacillus licheniformis (strain ATCC 14580 / DSM 13 / JCM 2505 / CCUG 7422 / NBRC 12200 / NCIMB 9375 / NCTC 10341 / NRRL NRS-1264 / Gibson 46), this protein is Elongation factor P.